The following is a 422-amino-acid chain: Testin (422 aa).

Positions 92–199 (MILTSPVAAK…GDVKLPKEVE (108 aa)) constitute a PET domain. Residues 135–165 (QPVAGSEGAQYRKKQLAKQLPAHDQDPSKCH) are disordered. Basic and acidic residues predominate over residues 155–165 (PAHDQDPSKCH). LIM zinc-binding domains lie at 234–299 (YYCF…SEKP), 300–359 (RCAG…NHAV), and 360–422 (SCQG…KMSS).

This sequence belongs to the prickle / espinas / testin family.

Its subcellular location is the cytoplasm. It localises to the cell cortex. The protein resides in the cell junction. The protein localises to the focal adhesion. Scaffold protein that may play a role in cell adhesion, cell spreading and in the reorganization of the actin cytoskeleton. May inhibit cell growth. Regulates cranial neural crest migration. Acts together with prickle1 to control axial elongation. The chain is Testin from Xenopus tropicalis (Western clawed frog).